Reading from the N-terminus, the 215-residue chain is Urease accessory protein UreG (215 aa).

24–31 is a GTP binding site; the sequence is GPVGSGKT.

The protein belongs to the SIMIBI class G3E GTPase family. UreG subfamily. Homodimer. UreD, UreF and UreG form a complex that acts as a GTP-hydrolysis-dependent molecular chaperone, activating the urease apoprotein by helping to assemble the nickel containing metallocenter of UreC. The UreE protein probably delivers the nickel.

It localises to the cytoplasm. Its function is as follows. Facilitates the functional incorporation of the urease nickel metallocenter. This process requires GTP hydrolysis, probably effectuated by UreG. The polypeptide is Urease accessory protein UreG (Burkholderia ambifaria (strain ATCC BAA-244 / DSM 16087 / CCUG 44356 / LMG 19182 / AMMD) (Burkholderia cepacia (strain AMMD))).